The chain runs to 431 residues: 3-phosphoshikimate 1-carboxyvinyltransferase (431 aa).

3-phosphoshikimate-binding residues include lysine 22, serine 23, and arginine 27. A phosphoenolpyruvate-binding site is contributed by lysine 22. Phosphoenolpyruvate contacts are provided by glycine 94 and arginine 122. 3-phosphoshikimate contacts are provided by serine 167, glutamine 169, aspartate 315, and lysine 342. Phosphoenolpyruvate is bound at residue glutamine 169. Aspartate 315 serves as the catalytic Proton acceptor. Residues arginine 346 and arginine 388 each contribute to the phosphoenolpyruvate site.

The protein belongs to the EPSP synthase family. As to quaternary structure, monomer.

It is found in the cytoplasm. The enzyme catalyses 3-phosphoshikimate + phosphoenolpyruvate = 5-O-(1-carboxyvinyl)-3-phosphoshikimate + phosphate. It participates in metabolic intermediate biosynthesis; chorismate biosynthesis; chorismate from D-erythrose 4-phosphate and phosphoenolpyruvate: step 6/7. Functionally, catalyzes the transfer of the enolpyruvyl moiety of phosphoenolpyruvate (PEP) to the 5-hydroxyl of shikimate-3-phosphate (S3P) to produce enolpyruvyl shikimate-3-phosphate and inorganic phosphate. The protein is 3-phosphoshikimate 1-carboxyvinyltransferase of Pelobacter propionicus (strain DSM 2379 / NBRC 103807 / OttBd1).